A 745-amino-acid polypeptide reads, in one-letter code: Junction plakoglobin (745 aa).

An N-acetylmethionine modification is found at Met-1. The O-linked (GlcNAc) threonine glycan is linked to Thr-14. Ser-99 and Ser-125 each carry phosphoserine. ARM repeat units lie at residues 132-171 (NYQD…QLSK), 172-215 (KEAS…LSHH), 216-255 (REGL…NLLL), 258-297 (EGAK…LLAY), 298-341 (GNQE…LSVC), 342-381 (PSNK…NLSD), 383-420 (ATKQ…NLTC), 423-464 (SKNK…HLTS), 470-510 (EMAQ…NLAL), 512-551 (PANH…QPYT), 574-613 (PMNR…ELAQ), and 615-661 (KEAA…PDYR). An interaction with DSC1 and DSG1 region spans residues 132–297 (NYQDDAELAT…TTDCLQLLAY (166 aa)). A Phosphoserine modification is found at Ser-182. Residues 574–661 (PMNRMEIFRL…ISEDKNPDYR (88 aa)) form an interaction with DSC1 region. A phosphoserine mark is found at Ser-665 and Ser-730.

It belongs to the beta-catenin family. As to quaternary structure, homodimer. Component of an E-cadherin/catenin adhesion complex composed of at least E-cadherin/CDH1 and gamma-catenin/JUP, and possibly alpha-catenin/CTNNA1; the complex is located to adherens junctions. The stable association of CTNNA1 is controversial as CTNNA1 was shown not to bind to F-actin when assembled in the complex. Interacts with MUC1. Interacts with CAV1. Interacts with PTPRJ. Interacts with DSG1. Interacts with DSC1 and DSC2. Interacts with PKP2. Interacts with PKP3 (via N-terminus); the interaction is required for PKP3 localization to desmosome cell-cell junctions. Interacts with DSG4. May be phosphorylated by FER.

The protein localises to the cell junction. It localises to the adherens junction. It is found in the desmosome. The protein resides in the cytoplasm. Its subcellular location is the cytoskeleton. The protein localises to the cell membrane. It localises to the nucleus. In terms of biological role, common junctional plaque protein. The membrane-associated plaques are architectural elements in an important strategic position to influence the arrangement and function of both the cytoskeleton and the cells within the tissue. The presence of plakoglobin in both the desmosomes and in the intermediate junctions suggests that it plays a central role in the structure and function of submembranous plaques. Acts as a substrate for VE-PTP and is required by it to stimulate VE-cadherin function in endothelial cells. Can replace beta-catenin in E-cadherin/catenin adhesion complexes which are proposed to couple cadherins to the actin cytoskeleton. The sequence is that of Junction plakoglobin from Sus scrofa (Pig).